Consider the following 202-residue polypeptide: Proteasome subunit beta 1 (202 aa).

Position 1 (Met-1) is a propeptide, removed in mature form; by autocatalysis. Catalysis depends on Thr-2, which acts as the Nucleophile.

The protein belongs to the peptidase T1B family. As to quaternary structure, the 20S proteasome core is composed of 14 alpha and 14 beta subunits that assemble into four stacked heptameric rings, resulting in a barrel-shaped structure. The two inner rings, each composed of seven catalytic beta subunits, are sandwiched by two outer rings, each composed of seven alpha subunits. The catalytic chamber with the active sites is on the inside of the barrel. Has a gated structure, the ends of the cylinder being occluded by the N-termini of the alpha-subunits. Is capped at one or both ends by the proteasome regulatory ATPase, PAN.

It localises to the cytoplasm. It carries out the reaction Cleavage of peptide bonds with very broad specificity.. Its activity is regulated as follows. The formation of the proteasomal ATPase PAN-20S proteasome complex, via the docking of the C-termini of PAN into the intersubunit pockets in the alpha-rings, triggers opening of the gate for substrate entry. Interconversion between the open-gate and close-gate conformations leads to a dynamic regulation of the 20S proteasome proteolysis activity. Component of the proteasome core, a large protease complex with broad specificity involved in protein degradation. The polypeptide is Proteasome subunit beta 1 (Pyrobaculum aerophilum (strain ATCC 51768 / DSM 7523 / JCM 9630 / CIP 104966 / NBRC 100827 / IM2)).